Reading from the N-terminus, the 540-residue chain is Receptor-interacting serine/threonine-protein kinase 2 (540 aa).

The Protein kinase domain maps to 18–294 (LADLRYLSRG…KCLIELEPVL (277 aa)). ATP is bound by residues 24 to 32 (LSRGASGTV) and lysine 47. The interval 65 to 73 (REAEILHKA) is helix alphaC. Catalysis depends on aspartate 146, which acts as the Proton acceptor. Residues 167-193 (LSKWRMMSLSQSRSSKSAPEGGTIVYM) are activation segment (AS). Serine 168 bears the Phosphoserine mark. Serine 174 carries the phosphoserine; alternate modification. Serine 176 bears the Phosphoserine; by autocatalysis mark. At serine 178 the chain carries Phosphoserine; alternate. The residue at position 180 (serine 180) is a Phosphoserine. Serine 181 carries the phosphoserine; alternate modification. Lysine 209 participates in a covalent cross-link: Glycyl lysine isopeptide (Lys-Gly) (interchain with G-Cter in ubiquitin). Residues 318-367 (SRTVHLSDKKKRELSPNIPVNSGPREESCGSSQLHKTSGSPGTSRSLSAP) form a disordered region. Residues 322-331 (HLSDKKKREL) are compositionally biased toward basic and acidic residues. Over residues 346–366 (CGSSQLHKTSGSPGTSRSLSA) the composition is skewed to polar residues. Phosphoserine occurs at positions 363 and 391. Residues 432–524 (GIAQQWIQSK…LQPYPEILVL (93 aa)) form the CARD domain. Tyrosine 472 is subject to Phosphotyrosine; by autocatalysis. Phosphoserine occurs at positions 525, 527, and 529. Residue lysine 536 forms a Glycyl lysine isopeptide (Lys-Gly) (interchain with G-Cter in ubiquitin) linkage. Serine 537 carries the phosphoserine modification.

It belongs to the protein kinase superfamily. TKL Ser/Thr protein kinase family. In terms of assembly, interacts (via CARD domain) with NOD2 (via CARD domain). Interacts (via CARD domain) with NOD1 (via CARD domain). Homooligomer; following interaction with NOD1 or NOD2, homooligomerizes via its CARD domain and forms long filaments named RIPosomes. Found in a signaling complex consisting of at least ARHGEF2, NOD2 and RIPK2. Interacts with ARHGEF2; the interaction mediates tyrosine phosphorylation of RIPK2 by Src kinase CSK. Interacts with MAP3K4; this interaction sequesters RIPK2 from the NOD2 signaling pathway. Interacts with IKBKG/NEMO. The polyubiquitinated protein interacts with MAP3K7/TAK1; interaction is indirect and is mediated by TAB2 and TAB3 that bind to polyubiquitin chains attached to RIPK2. Binds to CFLAR/CLARP and CASP1 via their CARD domains. Binds to BIRC3/c-IAP1 and BIRC2/c-IAP2, TRAF1, TRAF2, TRAF5 and TRAF6. Interacts with NLRP10. Interacts with CARD9. Interacts with INAVA; the interaction takes place upon PRR stimulation. Interacts (via CARD domain) with NGFR (via death domain). Interacts with IRGM; promoting RIPK2 degradation. Post-translationally, polyubiquitinated via both 'Lys-63'- and 'Met-1'-linked polyubiquitin following recruitment by NOD1 or NOD2, creating docking sites for downstream effectors, triggering activation of the NF-kappa-B and MAP kinases signaling. 'Lys-63'-linked polyubiquitination by XIAP is essential for NOD2 signaling and promotes recruitment of the LUBAC complex. Also polyubiquitinated with 'Lys-63'-linked chains by PELI3, BIRC2/c-IAP1 and BIRC3/c-IAP2. Ubiquitinated on Lys-209 via 'Lys-63'-linked by ITCH. Undergoes 'Lys-63'-linked deubiquitination by MYSM1 to attenuate NOD2-mediated inflammation and tissue damage. Polyubiquitinated with 'Lys-63'-linked chains in response to Shigella infection, promoting its SQSTM1/p62-dependent autophagic degradation. Undergoes 'Met-1'-linked polyubiquitination; the head-to-tail linear polyubiquitination is mediated by the LUBAC complex in response to NOD2 stimulation 'Met-1'-linked polyubiquitination. 'Lys-63'-linked polyubiquitination by XIAP is required for recruimtent of the LUBAC complex and subsequent. Linear polyubiquitination is restricted by FAM105B/otulin, probably to limit NOD2-dependent pro-inflammatory signaling activation of NF-kappa-B. In terms of processing, autophosphorylated. Phosphorylated at Ser-176, either via autophosphorylation or by LRRK2, enhancing activity. Autophosphorylation at Tyr-472 is required for effective NOD2 signaling. Autophosphorylation is however not essential for NOD2 signaling. Degraded via selective autophagy following interaction with IRGM. IRGM promotes NOD1/NOD2-RIPK2 RIPosome recruitment to autophagosome membranes. RIPK2 biquitinated via 'Lys-63'-linked chains is then recognized by SQSTM1/p62, leading to the SQSTM1/p62-dependent autophagic degradation of the NOD1/NOD2-RIPK2 RIPosome.

It localises to the cytoplasm. The protein resides in the cell membrane. The protein localises to the endoplasmic reticulum. The catalysed reaction is L-seryl-[protein] + ATP = O-phospho-L-seryl-[protein] + ADP + H(+). It carries out the reaction L-threonyl-[protein] + ATP = O-phospho-L-threonyl-[protein] + ADP + H(+). It catalyses the reaction L-tyrosyl-[protein] + ATP = O-phospho-L-tyrosyl-[protein] + ADP + H(+). With respect to regulation, in the inactive state, the helix alphaC is packed against the helical, non-phosphorylated activation segment (AS). Upon activation, helix alphaC is displaced and the phosphorylated AS becomes disordered. In terms of biological role, serine/threonine/tyrosine-protein kinase that plays an essential role in modulation of innate and adaptive immune responses. Acts as a key effector of NOD1 and NOD2 signaling pathways: upon activation by bacterial peptidoglycans, NOD1 and NOD2 oligomerize and recruit RIPK2 via CARD-CARD domains, leading to the formation of RIPK2 filaments. Once recruited, RIPK2 autophosphorylates and undergoes 'Lys-63'-linked polyubiquitination by E3 ubiquitin ligases XIAP, BIRC2 and BIRC3, as well as 'Met-1'-linked (linear) polyubiquitination by the LUBAC complex, becoming a scaffolding protein for downstream effectors. 'Met-1'-linked polyubiquitin chains attached to RIPK2 recruit IKBKG/NEMO, which undergoes 'Lys-63'-linked polyubiquitination in a RIPK2-dependent process. 'Lys-63'-linked polyubiquitin chains attached to RIPK2 serve as docking sites for TAB2 and TAB3 and mediate the recruitment of MAP3K7/TAK1 to IKBKG/NEMO, inducing subsequent activation of IKBKB/IKKB. In turn, NF-kappa-B is released from NF-kappa-B inhibitors and translocates into the nucleus where it activates the transcription of hundreds of genes involved in immune response, growth control, or protection against apoptosis. The protein kinase activity is dispensable for the NOD1 and NOD2 signaling pathways. Contributes to the tyrosine phosphorylation of the guanine exchange factor ARHGEF2 through Src tyrosine kinase leading to NF-kappa-B activation by NOD2. Also involved in adaptive immunity: plays a role during engagement of the T-cell receptor (TCR) in promoting BCL10 phosphorylation and subsequent NF-kappa-B activation. Plays a role in the inactivation of RHOA in response to NGFR signaling. The protein is Receptor-interacting serine/threonine-protein kinase 2 (RIPK2) of Bos taurus (Bovine).